The following is a 134-amino-acid chain: MTFVVAAVVLLTVVPLATPLKCVQCDGPLTEFDCKTTVPEAKDCPQLNTHCFRNDTFNSKNELIMVRRGCTNEKEPSPPCQEVGNGGRRCTYTCNSDGCNNAPGFAIAIEPSRMVIFIVTFSVMISFILHTSAN.

The first 19 residues, 1-19 (MTFVVAAVVLLTVVPLATP), serve as a signal peptide directing secretion.

Belongs to the scoloptoxin-05 family. In terms of processing, contains 5 disulfide bonds. Expressed by the venom gland.

The protein localises to the secreted. In Ethmostigmus rubripes (Giant centipede), this protein is U-scoloptoxin(05)-Er2a.